A 642-amino-acid polypeptide reads, in one-letter code: MDSVSFEDVAVNFTLEEWALLDSSQKKLYEDVMQETFKNLVCLGKKWEDQDIEDDHRNQGKNRRCHMVERLCESRRGSKCGETTSQMPNVNINKETFTGAKPHECSFCGRDFIHHSSLNRHMRSHTGQKPNEYQEYEKQPCKCKAVGKTFSYHHCFRKHERTHTGVKPYECKQCGKAFIYYQPFQRHERTHAGQKPYECKQCGKTFIYYQSFQKHAHTGKKPYECKQCGKAFICYQSFQRHKRTHTGEKPYECKQCGKAFSCPTYFRTHERTHTGEKPYKCKECGKAFSFLSSFRRHKRTHSGEKPYECKECGKAFFYSASFRAHVIIHTGARPYKCKECGKAFNSSNSCRVHERTHIGEKPYECKRCGKSFSWSISLRLHERTHTGEKPYECKQCHKTFSFSSSLREHETTHTGEKPYECKQCGKTFSFSSSLQRHERTHNAEKPYECKQCGKAFRCSSYFRIHERSHTGEKPYECKQCGKVFIRSSSFRLHERTHTGEKPYECKLCGKTFSFSSSLREHEKIHTGNKPFECKQCGKAFLRSSQIRLHERTHTGEKPYQCKQCGKAFISSSKFRMHERTHTGEKPYRCKQCGKAFRFSSSVRIHERSHTGEKPYECKQCGKAFISSSHFRLHERTHMGEKV.

The region spanning 4–76 is the KRAB domain; the sequence is VSFEDVAVNF…MVERLCESRR (73 aa). A C2H2-type 1 zinc finger spans residues 103-125; it reads HECSFCGRDFIHHSSLNRHMRSH. The segment at 141–163 adopts a C2H2-type 2; degenerate zinc-finger fold; the sequence is CKCKAVGKTFSYHHCFRKHERTH. The C2H2-type 3 zinc finger occupies 169–191; that stretch reads YECKQCGKAFIYYQPFQRHERTH. The segment at 197–217 adopts a C2H2-type 4; atypical zinc-finger fold; sequence YECKQCGKTFIYYQSFQKHAH. 15 consecutive C2H2-type zinc fingers follow at residues 223–245, 251–273, 279–301, 307–329, 335–357, 363–385, 391–413, 419–441, 447–469, 475–497, 503–525, 531–553, 559–581, 587–609, and 615–637; these read YECKQCGKAFICYQSFQRHKRTH, YECKQCGKAFSCPTYFRTHERTH, YKCKECGKAFSFLSSFRRHKRTH, YECKECGKAFFYSASFRAHVIIH, YKCKECGKAFNSSNSCRVHERTH, YECKRCGKSFSWSISLRLHERTH, YECKQCHKTFSFSSSLREHETTH, YECKQCGKTFSFSSSLQRHERTH, YECKQCGKAFRCSSYFRIHERSH, YECKQCGKVFIRSSSFRLHERTH, YECKLCGKTFSFSSSLREHEKIH, FECKQCGKAFLRSSQIRLHERTH, YQCKQCGKAFISSSKFRMHERTH, YRCKQCGKAFRFSSSVRIHERSH, and YECKQCGKAFISSSHFRLHERTH.

This sequence belongs to the krueppel C2H2-type zinc-finger protein family.

The protein resides in the nucleus. May be involved in transcriptional regulation. The polypeptide is Zinc finger protein 14 (ZNF14) (Homo sapiens (Human)).